Here is a 140-residue protein sequence, read N- to C-terminus: Nucleoside diphosphate kinase (140 aa).

6 residues coordinate ATP: K9, F57, R85, T91, R102, and N112. H115 (pros-phosphohistidine intermediate) is an active-site residue.

This sequence belongs to the NDK family. As to quaternary structure, homotetramer. Mg(2+) is required as a cofactor.

The protein resides in the cytoplasm. The catalysed reaction is a 2'-deoxyribonucleoside 5'-diphosphate + ATP = a 2'-deoxyribonucleoside 5'-triphosphate + ADP. It catalyses the reaction a ribonucleoside 5'-diphosphate + ATP = a ribonucleoside 5'-triphosphate + ADP. In terms of biological role, major role in the synthesis of nucleoside triphosphates other than ATP. The ATP gamma phosphate is transferred to the NDP beta phosphate via a ping-pong mechanism, using a phosphorylated active-site intermediate. This Chlorobium limicola (strain DSM 245 / NBRC 103803 / 6330) protein is Nucleoside diphosphate kinase.